We begin with the raw amino-acid sequence, 139 residues long: Lamprin 0.9 (139 aa).

A signal peptide spans 1 to 19 (MAAAIQALLVLALLHLATA). Tandem repeats lie at residues 42–46 (GGLGY), 47–51 (GGLGY), 52–56 (GGLGV), 57–61 (AGLGV), 62–66 (AGLGY), 67–71 (GGLGY), 92–96 (GGLGY), and 106–110 (GGLGY). Residues 42 to 110 (GGLGYGGLGY…YHHALGGLGY (69 aa)) are 8 X 5 AA approximate repeats.

In terms of assembly, the polymeric lamprin chains self-aggregate to form fibers and have secondary structures particularly rich in beta-sheets and in beta-turns.

It is found in the secreted. It localises to the extracellular space. Its subcellular location is the extracellular matrix. Its function is as follows. Self-aggregating protein that is part of the soluble form of lamprin. The chain is Lamprin 0.9 from Petromyzon marinus (Sea lamprey).